Here is a 111-residue protein sequence, read N- to C-terminus: DNA-binding protein MTH_1615 (111 aa).

This sequence belongs to the PDCD5 family.

DNA-binding protein which can interact with a randomly chosen 20-mer of double-stranded DNA. The polypeptide is DNA-binding protein MTH_1615 (Methanothermobacter thermautotrophicus (strain ATCC 29096 / DSM 1053 / JCM 10044 / NBRC 100330 / Delta H) (Methanobacterium thermoautotrophicum)).